Here is a 104-residue protein sequence, read N- to C-terminus: Enhancer of rudimentary homolog (104 aa).

N-acetylserine is present on Ser-2. Thr-11 is subject to Phosphothreonine. Residue Lys-12 forms a Glycyl lysine isopeptide (Lys-Gly) (interchain with G-Cter in SUMO2) linkage.

This sequence belongs to the E(R) family. As to quaternary structure, homodimer.

Its subcellular location is the nucleus. Functionally, may have a role in the cell cycle. This is Enhancer of rudimentary homolog (ERH) from Bos taurus (Bovine).